The chain runs to 344 residues: Envelope glycoprotein M (344 aa).

Residues 1–12 are Intravirion-facing; it reads MASSRVDTINLR. A helical membrane pass occupies residues 13 to 33; it reads IWLVSIICAALSFINVTVYLI. Topologically, residues 34–76 are virion surface; that stretch reads AINFPNLGFPCAYFEINDLKAVNLSANNQIYQMTHQLYINPVQ. Residues 77 to 97 form a helical membrane-spanning segment; the sequence is IICYVLIMAMLFLLIIIYYIV. The Intravirion portion of the chain corresponds to 98-125; that stretch reads CCAKVFSSNKTSNVNQTTRDITWMGDTS. The chain crosses the membrane as a helical span at residues 126–146; the sequence is SCFQFILIMDTFQLFVTALSF. Position 147 (Arg-147) is a topological domain, virion surface. The chain crosses the membrane as a helical span at residues 148–168; that stretch reads LVALGAFAYCIFFVCFTTFNV. The Intravirion segment spans residues 169-203; the sequence is TLITQFQSADKSFFAFQKIHPNLKGTVQFKTVVIN. The chain crosses the membrane as a helical span at residues 204–224; sequence LTELMLGYSTMFLGITTCLGV. Residues 225 to 238 are Virion surface-facing; the sequence is GNSIYIRSITVAYS. Residues 239-259 form a helical membrane-spanning segment; it reads SINTFLVMACIYSIVIEAVLV. The Intravirion segment spans residues 260 to 263; it reads RYVK. A helical transmembrane segment spans residues 264 to 284; the sequence is PLFGYYVGMFCGAVGLSFPIL. The Virion surface portion of the chain corresponds to 285 to 293; sequence QYETFFESE. Residues 294–314 traverse the membrane as a helical segment; it reads WSTGLIINLAVIAIISIGFII. The Intravirion portion of the chain corresponds to 315 to 344; that stretch reads CRLVRYLVKKKRRYKQLVNTESSSLMDENE.

This sequence belongs to the herpesviridae glycoprotein M family. Interacts (via N-terminus) with gN (via N-terminus). The gM-gN heterodimer forms the gCII complex.

It localises to the virion membrane. The protein localises to the host Golgi apparatus. It is found in the host trans-Golgi network. Its subcellular location is the host endosome membrane. The protein resides in the host nucleus inner membrane. Its function is as follows. Envelope glycoprotein important for virion assembly and egress. Plays a role in the correct incorporation of gH-gL into virion membrane. Directs the glycoprotein N (gN) to the host trans-Golgi network. The protein is Envelope glycoprotein M of Homo sapiens (Human).